A 335-amino-acid chain; its full sequence is MSLDINQIALHQLIKRDEQNLELVLRDSLLEPTETVVEMVAELHRVYSAKNKAYGLFSEESELAQTLRLQRQGEEDFLAFSRAATGRLRDELAKYPFADGGFVLFCHYRYLAVEYLLVAVLSNLSSMRVNENLDINPTHYLDINHADIVARIDLTEWETNPESTRYLTFLKGRVGRKVADFFMDFLGASEGLNTKAQNRGLLQAVDDFTAEAQLDKAERQNVRQQVYSYCNEQLQAGEEIELESLSKELAGVSEVSFTEFAAEKGYELEESFPADRSTLRQLTKFAGSGGGLTINFDAMLLGERIFWEPATDTLTIKGTPPNLRDQLQRRTSGGN.

It belongs to the YejK family.

It localises to the cytoplasm. It is found in the nucleoid. The polypeptide is Nucleoid-associated protein YejK (Shigella sonnei (strain Ss046)).